Here is a 563-residue protein sequence, read N- to C-terminus: Arginine--tRNA ligase (563 aa).

The 'HIGH' region signature appears at 121 to 131; sequence PNIAKPFSIGH.

The protein belongs to the class-I aminoacyl-tRNA synthetase family. In terms of assembly, monomer.

The protein localises to the cytoplasm. It catalyses the reaction tRNA(Arg) + L-arginine + ATP = L-arginyl-tRNA(Arg) + AMP + diphosphate. The chain is Arginine--tRNA ligase from Streptococcus pneumoniae serotype 19F (strain G54).